The chain runs to 142 residues: Membrane protein YneK (142 aa).

Residues F6–F26 form a helical membrane-spanning segment.

In terms of assembly, interacts with the N-terminal D1 domain of dynamin-like protein DynA.

It localises to the cell membrane. The protein is Membrane protein YneK (yneK) of Bacillus subtilis (strain 168).